A 248-amino-acid polypeptide reads, in one-letter code: 14-3-3 protein homolog 2 (248 aa).

It belongs to the 14-3-3 family.

The sequence is that of 14-3-3 protein homolog 2 from Echinococcus multilocularis (Fox tapeworm).